The following is a 643-amino-acid chain: PRVRSFIAHQSGITSVIRRSPDIAHRMVRSLSVSSQRNKSVAHHEDVYSHNLPPMDEKEMALYKLYRPERVTPKKRSAELLKEPRLNKGMGFSLYERQYLGLHGLLPPAFMTQEQQAYRVITKLREQPNDLARYIQLDGLQDRNEKLFYRVVCDHVKELMPIVYTPTVGLACQNFGYIYRKPKGLYITINDNSVSKIYQILSNWHEEDVRAIVVTDGERILGLGDLGAYGIGIPVGKLALYVALGGVQPKWCLPVLLDVGTNNMDLLNDPFYIGLRHKRVRGKDYDTLLDNFMKACTKKYGQKTLIQFEDFANPNAFRLLDKYQDKYTMFNDDIQGTASVIVAGLLTCTRVTKKLVSQEKYLFFGAGAASTGIAEMIVHQMQNEGISKEEACNRIYLMDIDGLVTKNRKEMNPRHVQFAKDMPETTSILEVIRAARPGALIGASTVRGAFNEEVIRAMAEINERPIIFALSNPTSKAECTAEEAYTFTNGAALYASGSPFPNFELNGHTYKPGQGNNAYIFPGVALGTILFQIRHVDNDLFLLAAKKVASCVTEDSLKVGRVYPQLKEIREISIQIAVEMAKYCYKNGTANLYPQPEDLEKYVRAQVYNTEYEELINATYDWPEQDMRHGFPVPVVRHDSMDG.

A mitochondrion-targeting transit peptide spans 1-38; it reads PRVRSFIAHQSGITSVIRRSPDIAHRMVRSLSVSSQRN. Residues Q116, R119, and R143 each coordinate fumarate. The active-site Proton donor is Y164. R219 is a (S)-malate binding site. Position 219 (R219) interacts with NAD(+). K237 acts as the Proton acceptor in catalysis. 2 residues coordinate a divalent metal cation: E309 and D310. Residues N313, D333, A366, A369, and N472 each coordinate NAD(+). Residue D333 coordinates a divalent metal cation. (S)-malate-binding residues include N472 and N516.

Belongs to the malic enzymes family. As to quaternary structure, homotetramer. Mg(2+) serves as cofactor. The cofactor is Mn(2+).

The protein localises to the mitochondrion matrix. The enzyme catalyses (S)-malate + NAD(+) = pyruvate + CO2 + NADH. It carries out the reaction oxaloacetate + H(+) = pyruvate + CO2. Subject to allosteric activation by fumarate. NAD-dependent mitochondrial malic enzyme that catalyzes the oxidative decarboxylation of malate to pyruvate. In Ascaris suum (Pig roundworm), this protein is NAD-dependent malic enzyme, mitochondrial.